A 299-amino-acid polypeptide reads, in one-letter code: Bifunctional protein FolD (299 aa).

NADP(+) contacts are provided by residues 168 to 170, Ser-193, and Ile-234; that span reads GRS.

It belongs to the tetrahydrofolate dehydrogenase/cyclohydrolase family. As to quaternary structure, homodimer.

The catalysed reaction is (6R)-5,10-methylene-5,6,7,8-tetrahydrofolate + NADP(+) = (6R)-5,10-methenyltetrahydrofolate + NADPH. It carries out the reaction (6R)-5,10-methenyltetrahydrofolate + H2O = (6R)-10-formyltetrahydrofolate + H(+). Its pathway is one-carbon metabolism; tetrahydrofolate interconversion. Its function is as follows. Catalyzes the oxidation of 5,10-methylenetetrahydrofolate to 5,10-methenyltetrahydrofolate and then the hydrolysis of 5,10-methenyltetrahydrofolate to 10-formyltetrahydrofolate. In Brucella abortus (strain S19), this protein is Bifunctional protein FolD.